Here is a 200-residue protein sequence, read N- to C-terminus: MEEGRPRMGVIVPGNSSPVPALSAGRSTVEGYDPKLHDPFFDGVSQQLADKGFITAAADDLITWARTGSLMWMTFGLACCAVEMMQASMPRYDLERYGFAPRASPRQSDVMIVAGTLTNKMAPALRKVYDQMPEPRYVISMGSCANGGGYYYYSYSVVRGCDRVVPVDIYVPGCPPTAEALVYGVLQLQKKIRRTGTIER.

[4Fe-4S] cluster contacts are provided by Cys79, Cys80, Cys144, and Cys174.

This sequence belongs to the complex I 20 kDa subunit family. NDH-1 is composed of 14 different subunits. Subunits NuoB, C, D, E, F, and G constitute the peripheral sector of the complex. It depends on [4Fe-4S] cluster as a cofactor.

The protein resides in the cell inner membrane. The enzyme catalyses a quinone + NADH + 5 H(+)(in) = a quinol + NAD(+) + 4 H(+)(out). In terms of biological role, NDH-1 shuttles electrons from NADH, via FMN and iron-sulfur (Fe-S) centers, to quinones in the respiratory chain. The immediate electron acceptor for the enzyme in this species is believed to be ubiquinone. Couples the redox reaction to proton translocation (for every two electrons transferred, four hydrogen ions are translocated across the cytoplasmic membrane), and thus conserves the redox energy in a proton gradient. The protein is NADH-quinone oxidoreductase subunit B of Caulobacter vibrioides (strain NA1000 / CB15N) (Caulobacter crescentus).